Consider the following 776-residue polypeptide: Semaphorin-4F (776 aa).

A signal peptide spans 1–39 (MLARAERPRPGPRPPPVFPFPPPLSLLLLLAILSAPVCG). At 40–665 (RVPRSVPRTS…GPSNRAHTVV (626 aa)) the chain is on the extracellular side. Positions 47 to 515 (RTSLPISEAD…SHTEVTQVNT (469 aa)) constitute a Sema domain. Asn69 carries N-linked (GlcNAc...) asparagine glycosylation. The cysteines at positions 117 and 127 are disulfide-linked. An N-linked (GlcNAc...) asparagine glycan is attached at Asn138. 3 disulfide bridges follow: Cys145/Cys154, Cys278/Cys389, and Cys302/Cys348. Residue Asn514 is glycosylated (N-linked (GlcNAc...) asparagine). Positions 517-568 (NCGRLQSCSECILAQDPVCAWSFRLDACVAHAGEHRGMVQDIESADVSSLCP) constitute a PSI domain. Disulfide bonds link Cys518/Cys535, Cys527/Cys544, and Cys592/Cys633. The 56-residue stretch at 585-640 (VGHVVLPCSPSSAWASCVWHQPSGVTALTPRRDGLEVVVTPGAMGAYACECQEGGA) folds into the Ig-like C2-type domain. The helical transmembrane segment at 666-686 (GAGLVGFLLGVLAASLTLLLI) threads the bilayer. The Cytoplasmic portion of the chain corresponds to 687 to 776 (GRRQQRRRQR…PLATCDETSI (90 aa)). Positions 702–741 (DKVGLDLGAPPSGTTSYSQDPPSPSPEDERLPLALGKRGS) are disordered. Residues Ser724 and Ser726 each carry the phosphoserine modification. The PDZ-binding signature appears at 774 to 776 (TSI).

It belongs to the semaphorin family. As to quaternary structure, interacts (via PDZ-binding motif) with DLG4/SAP90 (via PDZ domain 2); this interaction may promote translocation of DLG4/SAP90 to the membrane. In terms of tissue distribution, expressed at low levels in the developing embryo. Expressed at high levels in the lung and adult central nervous system, including the dorsal root ganglia.

Its subcellular location is the cell membrane. The protein resides in the postsynaptic density. It localises to the perikaryon. It is found in the cell projection. The protein localises to the dendrite. Probable cell surface receptor that regulates oligodendroglial precursor cell migration. Might also regulate differentiation of oligodendroglial precursor cells. Has growth cone collapse activity against retinal ganglion-cell axons. In Rattus norvegicus (Rat), this protein is Semaphorin-4F (Sema4f).